The chain runs to 181 residues: Translationally-controlled tumor protein homolog (181 aa).

The TCTP domain occupies Met1–Gln181.

This sequence belongs to the TCTP family.

The protein localises to the cytoplasm. Involved in calcium binding and microtubule stabilization. The chain is Translationally-controlled tumor protein homolog from Wuchereria bancrofti.